Consider the following 384-residue polypeptide: 1-deoxy-D-xylulose 5-phosphate reductoisomerase (384 aa).

Residues threonine 10, glycine 11, serine 12, isoleucine 13, arginine 37, asparagine 38, and asparagine 124 each contribute to the NADPH site. Residue lysine 125 coordinates 1-deoxy-D-xylulose 5-phosphate. Glutamate 126 contacts NADPH. Aspartate 150 contributes to the Mn(2+) binding site. Positions 151, 152, 176, and 199 each coordinate 1-deoxy-D-xylulose 5-phosphate. Glutamate 152 serves as a coordination point for Mn(2+). Glycine 205 lines the NADPH pocket. Residues serine 212, asparagine 217, lysine 218, and glutamate 221 each contribute to the 1-deoxy-D-xylulose 5-phosphate site. Glutamate 221 lines the Mn(2+) pocket.

The protein belongs to the DXR family. Mg(2+) is required as a cofactor. Mn(2+) serves as cofactor.

The enzyme catalyses 2-C-methyl-D-erythritol 4-phosphate + NADP(+) = 1-deoxy-D-xylulose 5-phosphate + NADPH + H(+). It functions in the pathway isoprenoid biosynthesis; isopentenyl diphosphate biosynthesis via DXP pathway; isopentenyl diphosphate from 1-deoxy-D-xylulose 5-phosphate: step 1/6. Catalyzes the NADPH-dependent rearrangement and reduction of 1-deoxy-D-xylulose-5-phosphate (DXP) to 2-C-methyl-D-erythritol 4-phosphate (MEP). The polypeptide is 1-deoxy-D-xylulose 5-phosphate reductoisomerase (Clostridium perfringens (strain ATCC 13124 / DSM 756 / JCM 1290 / NCIMB 6125 / NCTC 8237 / Type A)).